The following is a 110-amino-acid chain: Inner membrane protein YgiZ (110 aa).

Over 1–8 the chain is Cytoplasmic; that stretch reads MLKQKIKT. Residues 9-29 traverse the membrane as a helical segment; it reads IFEALLYIMLTYWLIDSFFAF. Residues 30–53 lie on the Periplasmic side of the membrane; that stretch reads NKYDWMLESGGNICSIPSVSGEDR. The chain crosses the membrane as a helical span at residues 54–74; that stretch reads ILQAMIAAFFLLTPLIILILR. At 75-83 the chain is on the cytoplasmic side; it reads KLFMREMFE. The chain crosses the membrane as a helical span at residues 84–104; that stretch reads FWVYVFSLGICLVCGWWLFWG. Residues 105–110 are Periplasmic-facing; the sequence is RFIFCY.

It is found in the cell inner membrane. The sequence is that of Inner membrane protein YgiZ (ygiZ) from Escherichia coli (strain K12).